The sequence spans 565 residues: Liver carboxylesterase 1 (565 aa).

The signal sequence occupies residues methionine 1 to glycine 18. A glycan (N-linked (GlcNAc...) asparagine) is linked at asparagine 79. Cysteine 87 and cysteine 116 are disulfide-bonded. Serine 221 acts as the Acyl-ester intermediate in catalysis. The cysteines at positions 273 and 284 are disulfide-linked. Glutamate 353 acts as the Charge relay system in catalysis. Asparagine 389 carries an N-linked (GlcNAc...) asparagine glycan. Histidine 467 (charge relay system) is an active-site residue. A short sequence motif (prevents secretion from ER) is located at residue leucine 565.

This sequence belongs to the type-B carboxylesterase/lipase family. As to quaternary structure, monomer.

The protein localises to the endoplasmic reticulum lumen. The enzyme catalyses a carboxylic ester + H2O = an alcohol + a carboxylate + H(+). In terms of biological role, involved in the detoxification of xenobiotics and in the activation of ester and amide prodrugs. The chain is Liver carboxylesterase 1 from Oryctolagus cuniculus (Rabbit).